A 143-amino-acid chain; its full sequence is Large ribosomal subunit protein uL11 (143 aa).

Belongs to the universal ribosomal protein uL11 family. Part of the ribosomal stalk of the 50S ribosomal subunit. Interacts with L10 and the large rRNA to form the base of the stalk. L10 forms an elongated spine to which L12 dimers bind in a sequential fashion forming a multimeric L10(L12)X complex. One or more lysine residues are methylated.

Forms part of the ribosomal stalk which helps the ribosome interact with GTP-bound translation factors. The chain is Large ribosomal subunit protein uL11 from Ralstonia pickettii (strain 12J).